The sequence spans 166 residues: Small ribosomal subunit protein uS5 (166 aa).

Residues 11-74 (LDDNVVAINR…EAAKKNLITV (64 aa)) form the S5 DRBM domain.

Belongs to the universal ribosomal protein uS5 family. In terms of assembly, part of the 30S ribosomal subunit. Contacts proteins S4 and S8.

In terms of biological role, with S4 and S12 plays an important role in translational accuracy. Its function is as follows. Located at the back of the 30S subunit body where it stabilizes the conformation of the head with respect to the body. This is Small ribosomal subunit protein uS5 from Lactiplantibacillus plantarum (strain ATCC BAA-793 / NCIMB 8826 / WCFS1) (Lactobacillus plantarum).